Reading from the N-terminus, the 208-residue chain is Protein-L-isoaspartate O-methyltransferase (208 aa).

The active site involves Ser59.

The protein belongs to the methyltransferase superfamily. L-isoaspartyl/D-aspartyl protein methyltransferase family.

It localises to the cytoplasm. It catalyses the reaction [protein]-L-isoaspartate + S-adenosyl-L-methionine = [protein]-L-isoaspartate alpha-methyl ester + S-adenosyl-L-homocysteine. In terms of biological role, catalyzes the methyl esterification of L-isoaspartyl residues in peptides and proteins that result from spontaneous decomposition of normal L-aspartyl and L-asparaginyl residues. It plays a role in the repair and/or degradation of damaged proteins. This is Protein-L-isoaspartate O-methyltransferase from Erwinia tasmaniensis (strain DSM 17950 / CFBP 7177 / CIP 109463 / NCPPB 4357 / Et1/99).